Here is a 397-residue protein sequence, read N- to C-terminus: Ribosomal RNA large subunit methyltransferase I (397 aa).

The region spanning 2 to 79 (TAAIYLVKGR…KEEINKAFFV (78 aa)) is the PUA domain.

The protein belongs to the methyltransferase superfamily. RlmI family.

Its subcellular location is the cytoplasm. It carries out the reaction cytidine(1962) in 23S rRNA + S-adenosyl-L-methionine = 5-methylcytidine(1962) in 23S rRNA + S-adenosyl-L-homocysteine + H(+). Its function is as follows. Specifically methylates the cytosine at position 1962 (m5C1962) of 23S rRNA. The sequence is that of Ribosomal RNA large subunit methyltransferase I from Vibrio parahaemolyticus serotype O3:K6 (strain RIMD 2210633).